A 359-amino-acid chain; its full sequence is 3-dehydroquinate synthase (359 aa).

NAD(+)-binding positions include 106 to 110, 130 to 131, K143, and K152; these read GVVGD and TS. Zn(2+) is bound by residues E185, H246, and H263.

This sequence belongs to the sugar phosphate cyclases superfamily. Dehydroquinate synthase family. Requires Co(2+) as cofactor. Zn(2+) serves as cofactor. NAD(+) is required as a cofactor.

It is found in the cytoplasm. It catalyses the reaction 7-phospho-2-dehydro-3-deoxy-D-arabino-heptonate = 3-dehydroquinate + phosphate. Its pathway is metabolic intermediate biosynthesis; chorismate biosynthesis; chorismate from D-erythrose 4-phosphate and phosphoenolpyruvate: step 2/7. Its function is as follows. Catalyzes the conversion of 3-deoxy-D-arabino-heptulosonate 7-phosphate (DAHP) to dehydroquinate (DHQ). The polypeptide is 3-dehydroquinate synthase (Clostridium kluyveri (strain ATCC 8527 / DSM 555 / NBRC 12016 / NCIMB 10680 / K1)).